A 464-amino-acid chain; its full sequence is Probable LL-diaminopimelate aminotransferase, chloroplastic (464 aa).

A chloroplast-targeting transit peptide spans 1–39 (MAASPAAGAAAATVSSFVSPSSFSSVKASKPDRLRPARR). Glycine 102 is a substrate binding site. Tyrosine 132 is a binding site for pyridoxal 5'-phosphate. Glutamate 135, lysine 167, tyrosine 190, and asparagine 247 together coordinate substrate. The pyridoxal 5'-phosphate site is built by asparagine 247, aspartate 275, tyrosine 278, serine 305, and serine 307. N6-(pyridoxal phosphate)lysine is present on lysine 308. Residue arginine 316 coordinates pyridoxal 5'-phosphate. 2 residues coordinate substrate: asparagine 347 and arginine 442.

It belongs to the class-I pyridoxal-phosphate-dependent aminotransferase family. LL-diaminopimelate aminotransferase subfamily. As to quaternary structure, homodimer. Requires pyridoxal 5'-phosphate as cofactor.

It is found in the plastid. It localises to the chloroplast. The enzyme catalyses (2S,6S)-2,6-diaminopimelate + 2-oxoglutarate = (S)-2,3,4,5-tetrahydrodipicolinate + L-glutamate + H2O + H(+). The protein operates within amino-acid biosynthesis; L-lysine biosynthesis via DAP pathway; LL-2,6-diaminopimelate from (S)-tetrahydrodipicolinate (aminotransferase route): step 1/1. Its function is as follows. Required for lysine biosynthesis. Catalyzes the direct conversion of tetrahydrodipicolinate to LL-diaminopimelate, a reaction that requires three enzymes in E.coli. This Oryza sativa subsp. japonica (Rice) protein is Probable LL-diaminopimelate aminotransferase, chloroplastic (AGD2).